The following is a 216-amino-acid chain: Putative transmembrane protein RNF32-DT (216 aa).

A helical membrane pass occupies residues 177–197; it reads WIPLLLVAGCVSCFVGLAVCV.

Expressed only in testis.

Its subcellular location is the cytoplasm. The protein localises to the membrane. The protein is Putative transmembrane protein RNF32-DT of Homo sapiens (Human).